The sequence spans 390 residues: RNA polymerase sigma factor SigA (390 aa).

A compositionally biased stretch (acidic residues) spans 48-57 (FLEPQTDEDD). The segment at 48–75 (FLEPQTDEDDAKSGKAAKSRRRTQSKKK) is disordered. Residues 62–75 (KAAKSRRRTQSKKK) are compositionally biased toward basic residues. Residues 158–228 (MVQSNLRLVV…TRAIADQSRT (71 aa)) form a sigma-70 factor domain-2 region. The Interaction with polymerase core subunit RpoC signature appears at 182–185 (DLIQ). The tract at residues 237–312 (ETISRIKKTT…ESDGETPEDQ (76 aa)) is sigma-70 factor domain-3. Positions 325-378 (VLDSLSPRERDVLRLRYGLDDGRMKTLEEIGQIFNVTRERIRQIEAKALRKLRH) are sigma-70 factor domain-4. A DNA-binding region (H-T-H motif) is located at residues 351 to 370 (LEEIGQIFNVTRERIRQIEA).

It belongs to the sigma-70 factor family. RpoD/SigA subfamily. Interacts transiently with the RNA polymerase catalytic core.

The protein localises to the cytoplasm. In terms of biological role, sigma factors are initiation factors that promote the attachment of RNA polymerase to specific initiation sites and are then released. This sigma factor is the primary sigma factor during exponential growth. The sequence is that of RNA polymerase sigma factor SigA from Nostoc sp. (strain PCC 7120 / SAG 25.82 / UTEX 2576).